We begin with the raw amino-acid sequence, 485 residues long: MEKQVRVRYAPSPTGHLHIGNARTALFNYLFARHQDGKFIIRIEDTDVKRNVAGGEESQLKYLKWLGMDWDEGVDVGGKYGPYRQTERLDIYKELYEDLLERGLAYKCYMTEEELEAEREGQIARGETPRYAGNHRNLTEEQIAQFEAEGRVPSIRFRVPDNREYKFNDIVKGDVTFHSNDFGDFVIVKKDGIPTYNFAVAVDDHLMEITHVLRGDDHISNTPKQMMIYEAFGWDTPQFGHMTLIVNESRKKLSKRDESIIQFIEQYEALGYLPEAIFNFIALLGWSPVGEEEIFSKDEFIKMFDAARLSKSPALFDSQKLKWMNNQYMKKQDLDTVVALSLPHLVKAGRVSEDLSEQEAAWVRDVIALYHEQMSYGAEIVELSEMFFKDHVDFEEEGKEVLKGEQVPEVLRAFAVELEALEEVEPATIKKAIKAVQKETGHKGKNLFMPIRVATTGQTHGPELPNAIALLGKEKVLKRIQKVIG.

Positions 11-21 (PSPTGHLHIGN) match the 'HIGH' region motif. Residues 252 to 256 (KLSKR) carry the 'KMSKS' region motif. Lys-255 serves as a coordination point for ATP.

It belongs to the class-I aminoacyl-tRNA synthetase family. Glutamate--tRNA ligase type 1 subfamily. Monomer.

The protein localises to the cytoplasm. It catalyses the reaction tRNA(Glu) + L-glutamate + ATP = L-glutamyl-tRNA(Glu) + AMP + diphosphate. In terms of biological role, catalyzes the attachment of glutamate to tRNA(Glu) in a two-step reaction: glutamate is first activated by ATP to form Glu-AMP and then transferred to the acceptor end of tRNA(Glu). This chain is Glutamate--tRNA ligase, found in Bacillus cytotoxicus (strain DSM 22905 / CIP 110041 / 391-98 / NVH 391-98).